We begin with the raw amino-acid sequence, 923 residues long: Protocadherin gamma-B5 (923 aa).

Positions 1–30 (MGRGTGELGRAERLPVLFLFLLSLFCPALC) are cleaved as a signal peptide. Cadherin domains lie at 31-133 (EQIR…TPKF), 134-242 (TQNS…PPVF), 243-343 (NRDV…SPEV), 344-448 (TFHS…APVF), 449-558 (HQAS…APRV), and 566-671 (DGSA…LPDI). Residues 31-687 (EQIRYRIPEE…SDPQAELQFY (657 aa)) lie on the Extracellular side of the membrane. N415 and N541 each carry an N-linked (GlcNAc...) asparagine glycan. A helical transmembrane segment spans residues 688–708 (LVVALALISVLFLLAVILAIA). At 709–923 (LRLRRSSSPA…KKKSGKKEKK (215 aa)) the chain is on the cytoplasmic side. Disordered stretches follow at residues 794 to 832 (TSHP…WPNN) and 893 to 923 (ATLT…KEKK). A compositionally biased stretch (polar residues) spans 807–832 (WRFSQAQRPGTSGSQNGDDTGTWPNN). Over residues 913–923 (NKKKSGKKEKK) the composition is skewed to basic residues.

The protein resides in the cell membrane. Functionally, potential calcium-dependent cell-adhesion protein. May be involved in the establishment and maintenance of specific neuronal connections in the brain. This chain is Protocadherin gamma-B5 (PCDHGB5), found in Pan troglodytes (Chimpanzee).